The sequence spans 428 residues: Gamma-glutamyl phosphate reductase (428 aa).

This sequence belongs to the gamma-glutamyl phosphate reductase family.

It is found in the cytoplasm. The catalysed reaction is L-glutamate 5-semialdehyde + phosphate + NADP(+) = L-glutamyl 5-phosphate + NADPH + H(+). It participates in amino-acid biosynthesis; L-proline biosynthesis; L-glutamate 5-semialdehyde from L-glutamate: step 2/2. Catalyzes the NADPH-dependent reduction of L-glutamate 5-phosphate into L-glutamate 5-semialdehyde and phosphate. The product spontaneously undergoes cyclization to form 1-pyrroline-5-carboxylate. This chain is Gamma-glutamyl phosphate reductase, found in Chelativorans sp. (strain BNC1).